The following is an 821-amino-acid chain: MSEQNTPQVREINISQEMRTSFLDYAMSVIVSRALPDVRDGLKPVHRRILYAMNDLGMTSDKPYKKSARIVGEVIGKYHPHGDSAVYESMVRMAQDFNYRYMLVDGHGNFGSVDGDSAAAMRYTEARMSKISMEILRDITKDTIDYQDNYDGSEREPVVMPSRFPNLLVNGAAGIAVGMATNIPPHQLGEIIDGVLAVSENPDITIPELMEVIPGPDFPTAGQILGRSGIRKAYESGRGSITIRAKAEIEQTSSGKERIIVTELPYQVNKAKLIEKIADLVRDKKIEGITDLRDESDRTGMRIVIEIRRDANANVILNNLYKQTALQTSFGINLLALVDGQPKVLTLKQCLEHYLDHQKVVIRRRTAYELRKAEARAHILEGLRVALDHLDAVISLIRNSQTAEIARTGLIEQFSLTEKQAQAILDMRLQRLTGLEREKIEEEYQSLVKLIAELKDILANEYKVLEIIREELTEIKERFNDERRTEIVTSGLETIEDEDLIERENIVVTLTHNGYVKRLPASTYRSQKRGGKGVQGMGTNEDDFVEHLISTSTHDTILFFSNKGKVYRAKGYEIPEYGRTAKGIPIINLLEVEKGEWINAIIPVTEFNAELYLFFTTKHGVSKRTSLSQFANIRNNGLIALSLREDDELMGVRLTDGTKQIIIGTKNGLLIRFPETDVREMGRTAAGVKGITLTDDDVVVGMEILEEESHVLIVTEKGYGKRTPAEEYRTQSRGGKGLKTAKITENNGQLVAVKATKGEEDLMIITASGVLIRMDINDISITGRVTQGVRLIRMAEEEHVATVALVEKNEEDENEEEQEEV.

Residues 35–500 (LPDVRDGLKP…GLETIEDEDL (466 aa)) form the Topo IIA-type catalytic domain. The active-site O-(5'-phospho-DNA)-tyrosine intermediate is the tyrosine 123. The short motif at 527-533 (QKRGGKG) is the GyrA-box element.

The protein belongs to the type II topoisomerase GyrA/ParC subunit family. In terms of assembly, heterotetramer, composed of two GyrA and two GyrB chains. In the heterotetramer, GyrA contains the active site tyrosine that forms a transient covalent intermediate with DNA, while GyrB binds cofactors and catalyzes ATP hydrolysis.

The protein localises to the cytoplasm. It carries out the reaction ATP-dependent breakage, passage and rejoining of double-stranded DNA.. Its function is as follows. A type II topoisomerase that negatively supercoils closed circular double-stranded (ds) DNA in an ATP-dependent manner to modulate DNA topology and maintain chromosomes in an underwound state. Negative supercoiling favors strand separation, and DNA replication, transcription, recombination and repair, all of which involve strand separation. Also able to catalyze the interconversion of other topological isomers of dsDNA rings, including catenanes and knotted rings. Type II topoisomerases break and join 2 DNA strands simultaneously in an ATP-dependent manner. The protein is DNA gyrase subunit A of Bacillus subtilis (strain 168).